Reading from the N-terminus, the 523-residue chain is Apolipoprotein N-acyltransferase (523 aa).

Helical transmembrane passes span 26-46, 49-66, 74-94, 109-129, 137-157, 185-205, and 212-232; these read LRFA…AFAP, WWWL…LVRQ, AWVG…WLYI, AAVL…AWLW, QLSG…SEWL, LVGV…LCAA, and WLAG…HTIA. The CN hydrolase domain occupies 246 to 487; sequence LQGNVPQDVK…LGTLQADVQG (242 aa). The active-site Proton acceptor is E284. The active site involves K345. C395 serves as the catalytic Nucleophile. Residues 494 to 514 form a helical membrane-spanning segment; sequence FVRTGNAPALGAGVLVLLAAL.

It belongs to the CN hydrolase family. Apolipoprotein N-acyltransferase subfamily.

The protein resides in the cell inner membrane. It carries out the reaction N-terminal S-1,2-diacyl-sn-glyceryl-L-cysteinyl-[lipoprotein] + a glycerophospholipid = N-acyl-S-1,2-diacyl-sn-glyceryl-L-cysteinyl-[lipoprotein] + a 2-acyl-sn-glycero-3-phospholipid + H(+). It functions in the pathway protein modification; lipoprotein biosynthesis (N-acyl transfer). Catalyzes the phospholipid dependent N-acylation of the N-terminal cysteine of apolipoprotein, the last step in lipoprotein maturation. The sequence is that of Apolipoprotein N-acyltransferase from Ralstonia nicotianae (strain ATCC BAA-1114 / GMI1000) (Ralstonia solanacearum).